The chain runs to 612 residues: Phosphomethylpyrimidine synthase (612 aa).

2 disordered regions span residues 1–33 (MTIKDARTPASTQNTAQADTAENTDTAEDTEAG) and 105–146 (AGRP…RDGN). The segment covering 12–24 (TQNTAQADTAENT) has biased composition (low complexity). A compositionally biased stretch (basic and acidic residues) spans 105-117 (AGRPVRPEDDGIK). Substrate-binding positions include asparagine 213, methionine 242, tyrosine 271, histidine 307, 327–329 (SRG), 368–371 (DGLR), and glutamate 407. Histidine 411 is a binding site for Zn(2+). Tyrosine 434 contributes to the substrate binding site. Position 475 (histidine 475) interacts with Zn(2+). [4Fe-4S] cluster is bound by residues cysteine 555, cysteine 558, and cysteine 563.

Belongs to the ThiC family. [4Fe-4S] cluster serves as cofactor.

It catalyses the reaction 5-amino-1-(5-phospho-beta-D-ribosyl)imidazole + S-adenosyl-L-methionine = 4-amino-2-methyl-5-(phosphooxymethyl)pyrimidine + CO + 5'-deoxyadenosine + formate + L-methionine + 3 H(+). Its pathway is cofactor biosynthesis; thiamine diphosphate biosynthesis. In terms of biological role, catalyzes the synthesis of the hydroxymethylpyrimidine phosphate (HMP-P) moiety of thiamine from aminoimidazole ribotide (AIR) in a radical S-adenosyl-L-methionine (SAM)-dependent reaction. This is Phosphomethylpyrimidine synthase from Streptomyces coelicolor (strain ATCC BAA-471 / A3(2) / M145).